The following is a 204-amino-acid chain: Guanylate kinase (204 aa).

A Guanylate kinase-like domain is found at 3–181 (GTLYIVSASS…AVSEMSAIFT (179 aa)). Residue 10–17 (ASSGTGKS) coordinates ATP.

This sequence belongs to the guanylate kinase family.

The protein resides in the cytoplasm. It carries out the reaction GMP + ATP = GDP + ADP. Essential for recycling GMP and indirectly, cGMP. This chain is Guanylate kinase, found in Xylella fastidiosa (strain Temecula1 / ATCC 700964).